Consider the following 474-residue polypeptide: NAD(P) transhydrogenase subunit beta (474 aa).

9 helical membrane passes run 4–24 (GLVQ…LAGL), 46–66 (IATI…AMII), 83–103 (MPEL…LVGF), 132–152 (VLTN…AVTF), 181–200 (LAAL…NPES), 202–222 (FPVL…VASI), 229–249 (VVVS…GFIL), 253–273 (LLIV…YIMC), and 321–341 (VIIT…VADI).

Belongs to the PNT beta subunit family. In terms of assembly, heterodimer of an alpha and a beta chain.

It is found in the cell inner membrane. The catalysed reaction is NAD(+) + NADPH + H(+)(in) = NADH + NADP(+) + H(+)(out). Functionally, the transhydrogenation between NADH and NADP is coupled to respiration and ATP hydrolysis and functions as a proton pump across the membrane. The chain is NAD(P) transhydrogenase subunit beta (pntB) from Haemophilus influenzae (strain ATCC 51907 / DSM 11121 / KW20 / Rd).